The sequence spans 594 residues: Aspartate--tRNA(Asp/Asn) ligase (594 aa).

Residue Glu173 participates in L-aspartate binding. Positions 197 to 200 (QLFK) are aspartate. L-aspartate is bound at residue Arg219. ATP is bound by residues 219–221 (RDE) and Gln228. His449 serves as a coordination point for L-aspartate. Glu482 is an ATP binding site. L-aspartate is bound at residue Arg489. ATP is bound at residue 534–537 (GLDR).

It belongs to the class-II aminoacyl-tRNA synthetase family. Type 1 subfamily. Homodimer.

The protein resides in the cytoplasm. The enzyme catalyses tRNA(Asx) + L-aspartate + ATP = L-aspartyl-tRNA(Asx) + AMP + diphosphate. Functionally, aspartyl-tRNA synthetase with relaxed tRNA specificity since it is able to aspartylate not only its cognate tRNA(Asp) but also tRNA(Asn). Reaction proceeds in two steps: L-aspartate is first activated by ATP to form Asp-AMP and then transferred to the acceptor end of tRNA(Asp/Asn). This chain is Aspartate--tRNA(Asp/Asn) ligase, found in Saccharophagus degradans (strain 2-40 / ATCC 43961 / DSM 17024).